The following is a 312-amino-acid chain: Methionyl-tRNA formyltransferase (312 aa).

(6S)-5,6,7,8-tetrahydrofolate is bound at residue 109–112 (SLLP).

Belongs to the Fmt family.

It carries out the reaction L-methionyl-tRNA(fMet) + (6R)-10-formyltetrahydrofolate = N-formyl-L-methionyl-tRNA(fMet) + (6S)-5,6,7,8-tetrahydrofolate + H(+). Functionally, attaches a formyl group to the free amino group of methionyl-tRNA(fMet). The formyl group appears to play a dual role in the initiator identity of N-formylmethionyl-tRNA by promoting its recognition by IF2 and preventing the misappropriation of this tRNA by the elongation apparatus. This Anaeromyxobacter sp. (strain K) protein is Methionyl-tRNA formyltransferase.